Here is a 224-residue protein sequence, read N- to C-terminus: Holliday junction branch migration complex subunit RuvA (224 aa).

Positions 1 to 67 are domain I; it reads MISWLKGEKV…EDGTSLYGFI (67 aa). A domain II region spans residues 68 to 146; that stretch reads EVNQRDLFRE…RFTDNDKTIH (79 aa). The tract at residues 147–157 is flexible linker; it reads ENKNDIEANQF. The domain III stretch occupies residues 157–224; it reads FSKYIDEIYL…ILMKLSEKST (68 aa).

Belongs to the RuvA family. In terms of assembly, homotetramer. Forms an RuvA(8)-RuvB(12)-Holliday junction (HJ) complex. HJ DNA is sandwiched between 2 RuvA tetramers; dsDNA enters through RuvA and exits via RuvB. An RuvB hexamer assembles on each DNA strand where it exits the tetramer. Each RuvB hexamer is contacted by two RuvA subunits (via domain III) on 2 adjacent RuvB subunits; this complex drives branch migration. In the full resolvosome a probable DNA-RuvA(4)-RuvB(12)-RuvC(2) complex forms which resolves the HJ.

It is found in the cytoplasm. In terms of biological role, the RuvA-RuvB-RuvC complex processes Holliday junction (HJ) DNA during genetic recombination and DNA repair, while the RuvA-RuvB complex plays an important role in the rescue of blocked DNA replication forks via replication fork reversal (RFR). RuvA specifically binds to HJ cruciform DNA, conferring on it an open structure. The RuvB hexamer acts as an ATP-dependent pump, pulling dsDNA into and through the RuvAB complex. HJ branch migration allows RuvC to scan DNA until it finds its consensus sequence, where it cleaves and resolves the cruciform DNA. The polypeptide is Holliday junction branch migration complex subunit RuvA (Prochlorococcus marinus (strain NATL2A)).